The sequence spans 126 residues: Fumarate reductase subunit C (126 aa).

3 helical membrane passes run Ile-30–Gly-50, Val-64–Phe-84, and Val-105–Leu-125.

The protein belongs to the FrdC family. Part of an enzyme complex containing four subunits: a flavoprotein (FrdA), an iron-sulfur protein (FrdB), and two hydrophobic anchor proteins (FrdC and FrdD).

The protein localises to the cell membrane. In terms of biological role, anchors the catalytic components of the fumarate reductase complex to the cell membrane, binds quinones. The protein is Fumarate reductase subunit C of Mycobacterium tuberculosis (strain ATCC 25177 / H37Ra).